The sequence spans 279 residues: Elongation factor Ts (279 aa).

The segment at 80 to 83 is involved in Mg(2+) ion dislocation from EF-Tu; that stretch reads TDFV.

Belongs to the EF-Ts family.

Its subcellular location is the cytoplasm. Its function is as follows. Associates with the EF-Tu.GDP complex and induces the exchange of GDP to GTP. It remains bound to the aminoacyl-tRNA.EF-Tu.GTP complex up to the GTP hydrolysis stage on the ribosome. The chain is Elongation factor Ts from Borrelia garinii subsp. bavariensis (strain ATCC BAA-2496 / DSM 23469 / PBi) (Borreliella bavariensis).